Here is a 1232-residue protein sequence, read N- to C-terminus: Histone-lysine N-methyltransferase MECOM (1232 aa).

The tract at residues 22-68 is disordered; sequence PEIPLEEMPDADADGITSVPSLHIQEPCSPATSSESFTPKEGSPYKA. A compositionally biased stretch (acidic residues) spans 25-34; it reads PLEEMPDADA. The region spanning 80–192 is the SET domain; it reads DEFELRESTM…PGEELLLFMK (113 aa). Glycyl lysine isopeptide (Lys-Gly) (interchain with G-Cter in SUMO2) cross-links involve residues K101 and K192. Residues 191–442 form an interaction with SUV39H1 and probably MAPK9 and SMAD3 region; the sequence is MKSEEDPHEP…NHFAAGGFFG (252 aa). 5 consecutive C2H2-type zinc fingers follow at residues 211-238, 265-287, 293-315, 321-344, and 350-372; these read HRCE…STPH, QDCK…MLSH, YKCD…QMSH, YECE…RSQH, and HACP…KHIH. K294 is covalently cross-linked (Glycyl lysine isopeptide (Lys-Gly) (interchain with G-Cter in SUMO2)). Residues K369 and K376 each participate in a glycyl lysine isopeptide (Lys-Gly) (interchain with G-Cter in SUMO2) cross-link. A C2H2-type 6 zinc finger spans residues 378–400; it reads FICEVCHKSYTQFSNLCRHKRMH. The C2H2-type 7; atypical zinc-finger motif lies at 407–429; the sequence is IKCKDCGQMFSTTSSLNKHRRFC. Residues K432, K525, K545, K549, and K557 each participate in a glycyl lysine isopeptide (Lys-Gly) (interchain with G-Cter in SUMO2) cross-link. The disordered stretch occupies residues 548–622; the sequence is SKHPPVGDNK…KCKENGKMFK (75 aa). A compositionally biased stretch (basic and acidic residues) spans 562–577; sequence LPERSSEERPLEKISD. A compositionally biased stretch (polar residues) spans 588-600; that stretch reads STPSGSDLETTSG. A compositionally biased stretch (basic and acidic residues) spans 608 to 622; sequence ESDKEKCKENGKMFK. The Nuclear localization signal motif lies at 611 to 624; sequence KEKCKENGKMFKDK. Residue K624 forms a Glycyl lysine isopeptide (Lys-Gly) (interchain with G-Cter in SUMO2) linkage. The residue at position 626 (S626) is a Phosphoserine. Residues K637, K665, K687, and K723 each participate in a glycyl lysine isopeptide (Lys-Gly) (interchain with G-Cter in SUMO2) cross-link. The disordered stretch occupies residues 720 to 823; sequence LPLKMEPQSP…DGSLQHARPT (104 aa). Position 728 is a phosphoserine (S728). Glycyl lysine isopeptide (Lys-Gly) (interchain with G-Cter in SUMO2) cross-links involve residues K733, K734, and K737. At S742 the chain carries Phosphoserine. Residues 743–747 carry the CTBP-binding motif 1 motif; sequence PFDLT. Glycyl lysine isopeptide (Lys-Gly) (interchain with G-Cter in SUMO2) cross-links involve residues K751, K754, and K762. Residues 758–773 are compositionally biased toward polar residues; the sequence is SGPSKPSGTPATSQDQ. Residues 774–778 carry the CTBP-binding motif 2 motif; sequence PLDLS. Glycyl lysine isopeptide (Lys-Gly) (interchain with G-Cter in SUMO2) cross-links involve residues K789, K802, and K803. The span at 791-805 shows a compositional bias: basic and acidic residues; it reads TEPRKNHVFGEKKGS. Positions 806 to 816 are enriched in polar residues; it reads NMDTRPSSDGS. Glycyl lysine isopeptide (Lys-Gly) (interchain with G-Cter in SUMO2) cross-links involve residues K837, K846, K848, and K879. 3 consecutive C2H2-type zinc fingers follow at residues 914–936, 942–965, and 971–993; these read YTCR…LRTH, YRCK…RNIH, and FKCH…LKKH. K1020 is covalently cross-linked (Glycyl lysine isopeptide (Lys-Gly) (interchain with G-Cter in SUMO2)). Positions 1032-1043 are enriched in polar residues; sequence IGNSNHGSQSPR. The segment at 1032-1107 is disordered; it reads IGNSNHGSQS…GVTRLDEEIP (76 aa). Phosphoserine occurs at positions 1039 and 1041. Over residues 1044 to 1059 the composition is skewed to basic and acidic residues; sequence NMEERMNGSHFKDKKA. Residues K1055 and K1058 each participate in a glycyl lysine isopeptide (Lys-Gly) (interchain with G-Cter in SUMO2) cross-link. A compositionally biased stretch (acidic residues) spans 1068-1088; sequence LLDDEEVEDEVLLDEEDEDND. Positions 1089–1104 are enriched in basic and acidic residues; it reads IPGKPRKELGVTRLDE. Residues K1122, K1129, K1134, K1151, K1178, and K1186 each participate in a glycyl lysine isopeptide (Lys-Gly) (interchain with G-Cter in SUMO2) cross-link.

In terms of assembly, homooligomer. Interacts with CTBP1. Interacts with SMAD3 (via MH2 domain); the interaction is direct. Interacts with SMAD4; through interaction with SMAD3. Interacts with CREBBP, KAT2B and histone deacetylases. Interacts with MAPK8 and MAPK9; inhibits JNK signaling. Interacts with SUV39H1 (via SET domain); enhances MECOM transcriptional repression activity. Post-translationally, may be acetylated by CREBBP and KAT2B.

It is found in the nucleus. Its subcellular location is the nucleus speckle. The protein resides in the cytoplasm. It carries out the reaction L-lysyl(9)-[histone H3] + S-adenosyl-L-methionine = N(6)-methyl-L-lysyl(9)-[histone H3] + S-adenosyl-L-homocysteine + H(+). Functions as a transcriptional regulator binding to DNA sequences in the promoter region of target genes and regulating positively or negatively their expression. Oncogene which plays a role in development, cell proliferation and differentiation. May also play a role in apoptosis through regulation of the JNK and TGF-beta signaling. Involved in hematopoiesis. Functionally, displays histone methyltransferase activity and monomethylates 'Lys-9' of histone H3 (H3K9me1) in vitro. Probably catalyzes the monomethylation of free histone H3 in the cytoplasm which is then transported to the nucleus and incorporated into nucleosomes where SUV39H methyltransferases use it as a substrate to catalyze histone H3 'Lys-9' trimethylation. Likely to be one of the primary histone methyltransferases along with PRDM16 that direct cytoplasmic H3K9me1 methylation. This is Histone-lysine N-methyltransferase MECOM from Mus musculus (Mouse).